A 491-amino-acid polypeptide reads, in one-letter code: Protein nucleotidyltransferase YdiU (491 aa).

Positions 94, 96, 97, 117, 129, 130, 180, and 187 each coordinate ATP. D256 serves as the catalytic Proton acceptor. The Mg(2+) site is built by N257 and D266. D266 lines the ATP pocket.

Belongs to the SELO family. It depends on Mg(2+) as a cofactor. Mn(2+) serves as cofactor.

It carries out the reaction L-seryl-[protein] + ATP = 3-O-(5'-adenylyl)-L-seryl-[protein] + diphosphate. The enzyme catalyses L-threonyl-[protein] + ATP = 3-O-(5'-adenylyl)-L-threonyl-[protein] + diphosphate. The catalysed reaction is L-tyrosyl-[protein] + ATP = O-(5'-adenylyl)-L-tyrosyl-[protein] + diphosphate. It catalyses the reaction L-histidyl-[protein] + UTP = N(tele)-(5'-uridylyl)-L-histidyl-[protein] + diphosphate. It carries out the reaction L-seryl-[protein] + UTP = O-(5'-uridylyl)-L-seryl-[protein] + diphosphate. The enzyme catalyses L-tyrosyl-[protein] + UTP = O-(5'-uridylyl)-L-tyrosyl-[protein] + diphosphate. Nucleotidyltransferase involved in the post-translational modification of proteins. It can catalyze the addition of adenosine monophosphate (AMP) or uridine monophosphate (UMP) to a protein, resulting in modifications known as AMPylation and UMPylation. This Bacillus cytotoxicus (strain DSM 22905 / CIP 110041 / 391-98 / NVH 391-98) protein is Protein nucleotidyltransferase YdiU.